A 198-amino-acid polypeptide reads, in one-letter code: Nucleoid occlusion factor SlmA (198 aa).

The HTH tetR-type domain maps to 10 to 70; it reads NRREEILQSL…SLIEFIEDSL (61 aa). Residues 33–52 constitute a DNA-binding region (H-T-H motif); it reads TTAKLAASVGVSEAALYRHF. The stretch at 117–145 forms a coiled coil; sequence EQDRLQGRINQLFERIEAQLRQVMREKKM.

The protein belongs to the nucleoid occlusion factor SlmA family. As to quaternary structure, homodimer. Interacts with FtsZ.

The protein localises to the cytoplasm. It is found in the nucleoid. Its function is as follows. Required for nucleoid occlusion (NO) phenomenon, which prevents Z-ring formation and cell division over the nucleoid. Acts as a DNA-associated cell division inhibitor that binds simultaneously chromosomal DNA and FtsZ, and disrupts the assembly of FtsZ polymers. SlmA-DNA-binding sequences (SBS) are dispersed on non-Ter regions of the chromosome, preventing FtsZ polymerization at these regions. The polypeptide is Nucleoid occlusion factor SlmA (Klebsiella pneumoniae subsp. pneumoniae (strain ATCC 700721 / MGH 78578)).